The chain runs to 50 residues: Large ribosomal subunit protein bL33B (50 aa).

This sequence belongs to the bacterial ribosomal protein bL33 family.

This is Large ribosomal subunit protein bL33B from Streptococcus pneumoniae (strain ATCC BAA-255 / R6).